A 247-amino-acid chain; its full sequence is Aliphatic sulfonates import ATP-binding protein SsuB 3 (247 aa).

In terms of domain architecture, ABC transporter spans 13 to 227 (VRVRGAGRAF…SVVDPEFSAL (215 aa)). 45 to 52 (GASGSGKS) contacts ATP.

This sequence belongs to the ABC transporter superfamily. Aliphatic sulfonates importer (TC 3.A.1.17.2) family. The complex is composed of two ATP-binding proteins (SsuB), two transmembrane proteins (SsuC) and a solute-binding protein (SsuA).

The protein resides in the cell membrane. It catalyses the reaction ATP + H2O + aliphatic sulfonate-[sulfonate-binding protein]Side 1 = ADP + phosphate + aliphatic sulfonateSide 2 + [sulfonate-binding protein]Side 1.. Its function is as follows. Part of the ABC transporter complex SsuABC involved in aliphatic sulfonates import. Responsible for energy coupling to the transport system. This chain is Aliphatic sulfonates import ATP-binding protein SsuB 3, found in Nocardia farcinica (strain IFM 10152).